Reading from the N-terminus, the 747-residue chain is DNA repair and recombination protein RAD54-like (747 aa).

A disordered region spans residues 1-41 (MRRSLAPSQLAKRKPEGRSCDDEDWQPGLVTPRKRKSSSET). Residues 2–9 (RRSLAPSQ) form a required for chromatin remodeling, strand pairing activities and coupling of ATPase activity region. Ser-38 is modified (phosphoserine). One can recognise a Helicase ATP-binding domain in the interval 170 to 345 (SRRIPGSHGC…FSLVHFVNSG (176 aa)). 183–190 (DEMGLGKT) is a binding site for ATP. A DEGH box motif is present at residues 296–299 (DEGH). One can recognise a Helicase C-terminal domain in the interval 500–653 (VLDYILAVTR…CVVDEEQDVE (154 aa)). Lys-515 is modified (N6-acetyllysine). Residue Ser-572 is modified to Phosphoserine; by NEK1.

It belongs to the SNF2/RAD54 helicase family. Homohexamer. Interacts (via N-terminus) with RAD51. Interacts with NAP1L1. Interacts with BRD9; this interaction orchestrates RAD51-RAD54 complex formation. Acetylated. Acetylation promotes interaction with BRD9, and subsequently with RAD54, which is essential for homologous recombination (HR). Post-translationally, phosphorylated. Phosphorylation at Ser-572 by NEK1 specifically in G2 phase allows efficient removal of RAD51 filaments from DNA.

It is found in the nucleus. It catalyses the reaction ATP + H2O = ADP + phosphate + H(+). Functionally, plays an essential role in homologous recombination (HR) which is a major pathway for repairing DNA double-strand breaks (DSBs), single-stranded DNA (ssDNA) gaps, and stalled or collapsed replication forks. Acts as a molecular motor during the homology search and guides RAD51 ssDNA along a donor dsDNA thereby changing the homology search from the diffusion-based mechanism to a motor-guided mechanism. Also plays an essential role in RAD51-mediated synaptic complex formation which consists of three strands encased in a protein filament formed once homology is recognized. Once DNA strand exchange occured, dissociates RAD51 from nucleoprotein filaments formed on dsDNA. The protein is DNA repair and recombination protein RAD54-like (RAD54L) of Homo sapiens (Human).